The following is a 306-amino-acid chain: Hydroxypyruvate reductase (306 aa).

NAD(+) is bound by residues 152–153 (NI), D172, 228–230 (TAR), and D254. The active site involves R230. E259 is an active-site residue. Residue H280 is the Proton donor of the active site. Residue 280-283 (HIGA) participates in NAD(+) binding.

It belongs to the D-isomer specific 2-hydroxyacid dehydrogenase family.

The catalysed reaction is (R)-glycerate + NAD(+) = 3-hydroxypyruvate + NADH + H(+). The enzyme catalyses (R)-glycerate + NADP(+) = 3-hydroxypyruvate + NADPH + H(+). In terms of biological role, involved in the degradation of L-serine via 3-hydroxypyruvate. Catalyzes the non-reversible reduction of 3-hydroxypyruvate to yield D-glycerate. The protein is Hydroxypyruvate reductase of Thermotoga maritima (strain ATCC 43589 / DSM 3109 / JCM 10099 / NBRC 100826 / MSB8).